The chain runs to 355 residues: Protein RecA (355 aa).

ATP is bound at residue 69-76 (GPESSGKT). The segment at 329 to 355 (AYGLPDREETKREETAQIPDTEKTKDV) is disordered.

Belongs to the RecA family.

Its subcellular location is the cytoplasm. Its function is as follows. Can catalyze the hydrolysis of ATP in the presence of single-stranded DNA, the ATP-dependent uptake of single-stranded DNA by duplex DNA, and the ATP-dependent hybridization of homologous single-stranded DNAs. It interacts with LexA causing its activation and leading to its autocatalytic cleavage. This is Protein RecA from Desulfotalea psychrophila (strain LSv54 / DSM 12343).